Here is a 1186-residue protein sequence, read N- to C-terminus: DNA-directed RNA polymerase subunit beta (1186 aa).

Positions 1149–1186 are disordered; that stretch reads KEEDDDPSTSSDDLGFNIGARPDAAAKEDQVAEEPEFQ.

Belongs to the RNA polymerase beta chain family. As to quaternary structure, the RNAP catalytic core consists of 2 alpha, 1 beta, 1 beta' and 1 omega subunit. When a sigma factor is associated with the core the holoenzyme is formed, which can initiate transcription.

The catalysed reaction is RNA(n) + a ribonucleoside 5'-triphosphate = RNA(n+1) + diphosphate. In terms of biological role, DNA-dependent RNA polymerase catalyzes the transcription of DNA into RNA using the four ribonucleoside triphosphates as substrates. This chain is DNA-directed RNA polymerase subunit beta, found in Bifidobacterium adolescentis (strain ATCC 15703 / DSM 20083 / NCTC 11814 / E194a).